The chain runs to 212 residues: Large ribosomal subunit protein uL3 (212 aa).

The tract at residues 133-156 (SMTHGSKNHRLPGSTGAGTTPGRV) is disordered.

It belongs to the universal ribosomal protein uL3 family. As to quaternary structure, part of the 50S ribosomal subunit. Forms a cluster with proteins L14 and L19.

One of the primary rRNA binding proteins, it binds directly near the 3'-end of the 23S rRNA, where it nucleates assembly of the 50S subunit. This is Large ribosomal subunit protein uL3 from Crocosphaera subtropica (strain ATCC 51142 / BH68) (Cyanothece sp. (strain ATCC 51142)).